Reading from the N-terminus, the 95-residue chain is Exodeoxyribonuclease 7 small subunit (95 aa).

Positions 65–95 (ETINPAETARPAKPENAPESPRMNDLFGTES) are disordered.

This sequence belongs to the XseB family. As to quaternary structure, heterooligomer composed of large and small subunits.

It localises to the cytoplasm. It catalyses the reaction Exonucleolytic cleavage in either 5'- to 3'- or 3'- to 5'-direction to yield nucleoside 5'-phosphates.. Bidirectionally degrades single-stranded DNA into large acid-insoluble oligonucleotides, which are then degraded further into small acid-soluble oligonucleotides. The protein is Exodeoxyribonuclease 7 small subunit of Chlorobaculum tepidum (strain ATCC 49652 / DSM 12025 / NBRC 103806 / TLS) (Chlorobium tepidum).